Here is a 687-residue protein sequence, read N- to C-terminus: Solute carrier organic anion transporter family member 1B2 (687 aa).

Topologically, residues 1–28 (MDHTQQSRKAAEAQPSRSKQTRFCDGFK) are cytoplasmic. Residues 29-48 (LFLAALSFSYICKALGGVVM) form a helical membrane-spanning segment. The Extracellular segment spans residues 49–67 (KSSITQIERRFDIPSSISG). The chain crosses the membrane as a helical span at residues 68 to 88 (LIDGGFEIGNLLVIVFVSYFG). The Cytoplasmic segment spans residues 89–94 (SKLHRP). A helical transmembrane segment spans residues 95–119 (KLIGIGCFIMGIGSILTALPHFFMG). Residues 120 to 165 (YYKYAKENDIGSLGNSTLTCFINQMTSPTGPSPEIVEKGCEKGLKS) lie on the Extracellular side of the membrane. Asparagine 134 carries an N-linked (GlcNAc...) asparagine glycan. A helical transmembrane segment spans residues 166 to 194 (HMWIYVLMGNMLRGIGETPIVPLGISYLD). Over 195 to 213 (DFAKEGHTSMHLGTLHTIA) the chain is Cytoplasmic. The chain crosses the membrane as a helical span at residues 214–234 (MIGPILGFIMSSVFAKIYVDV). At 235 to 252 (GYVDLNSVRITPNDARWV) the chain is on the extracellular side. A helical membrane pass occupies residues 253–277 (GAWWLSFIVNGLLCITSSIPFFFLP). Residues 278 to 328 (KIPKRSQEERKNSVSLHAPKTDEEKKHMTNLTKQEEQDPSNMTGFLRSLRS) are Cytoplasmic-facing. Positions 286–311 (ERKNSVSLHAPKTDEEKKHMTNLTKQ) are disordered. A phosphoserine mark is found at serine 290 and serine 292. The chain crosses the membrane as a helical span at residues 329 to 350 (ILTNEIYVIFLILTLLQVSGFI). Residues 351-370 (GSFTYLFKFIEQQFGRTASQ) lie on the Extracellular side of the membrane. Residues 371–394 (ANFLLGIITIPTMATAMFLGGYIV) traverse the membrane as a helical segment. At 395-398 (KKFK) the chain is on the cytoplasmic side. Residues 399–422 (LTSVGIAKFVFFTSSVAYAFQFLY) form a helical membrane-spanning segment. At 423–531 (FPLLCENKPF…YKCKTNYYFY (109 aa)) the chain is on the extracellular side. One can recognise a Kazal-like domain in the interval 450–507 (DVPLSYCNSDCSCDKNQWEPICGENGVTYISPCLAGCKSFRGDKKPNNTEFYDCSCIS). Disulfide bonds link cysteine 456/cysteine 486, cysteine 462/cysteine 482, and cysteine 471/cysteine 505. 2 N-linked (GlcNAc...) asparagine glycosylation sites follow: asparagine 496 and asparagine 511. The helical transmembrane segment at 532-554 (IILQVTVSFFTAMGSPSLILILM) threads the bilayer. The Cytoplasmic segment spans residues 555–563 (KSVQPELKS). Residues 564–589 (LAMGFHSLIIRALGGILAPIYYGAFI) traverse the membrane as a helical segment. The Extracellular segment spans residues 590–623 (DRTCIKWSVTSCGKRGACRLYNSRLFGFSYLGLN). The chain crosses the membrane as a helical span at residues 624–641 (LALKTPPLFLYVVLIYFT). The Cytoplasmic portion of the chain corresponds to 642-687 (KRKYKRNDNKTLENGRQFTDEGNPDSVNKNGYYCVPYDEQSNETPL). Threonine 660 bears the Phosphothreonine mark. At serine 667 the chain carries Phosphoserine.

This sequence belongs to the organo anion transporter (TC 2.A.60) family. As to expression, liver specific. Expression is highest in central perivenous hepatocytes and lowest in the periportal region. Isoform 1 predominates. Not detected in heart, brain, kidney, skeletal muscle, lung, testis or spleen.

It is found in the basolateral cell membrane. It catalyses the reaction estrone 3-sulfate(out) = estrone 3-sulfate(in). The catalysed reaction is taurocholate(out) = taurocholate(in). The enzyme catalyses prostaglandin E2(out) = prostaglandin E2(in). It carries out the reaction L-thyroxine(out) = L-thyroxine(in). Mediates the Na(+)-independent uptake of organic anions such as taurochlate, bromosulfophthalein and steroid conjugates (estrone 3-sulfate, 17-beta-glucuronosyl estradiol, dehydroepiandrosterone sulfate). Also transports prostaglandin E2 and L-thyroxine (T4). Shows a pH-sensitive substrate specificity which may be ascribed to the protonation state of the binding site and leads to a stimulation of substrate transport in an acidic microenvironment. Hydrogencarbonate/HCO3(-) acts as the probable counteranion that exchanges for organic anions. The chain is Solute carrier organic anion transporter family member 1B2 (Slco1b2) from Rattus norvegicus (Rat).